Here is a 66-residue protein sequence, read N- to C-terminus: Large ribosomal subunit protein bL33c (66 aa).

Belongs to the bacterial ribosomal protein bL33 family.

It is found in the plastid. The protein localises to the chloroplast. The polypeptide is Large ribosomal subunit protein bL33c (Brachypodium distachyon (Purple false brome)).